A 316-amino-acid polypeptide reads, in one-letter code: tRNA dimethylallyltransferase (316 aa).

17–24 (GPTASGKT) lines the ATP pocket. Residue 19 to 24 (TASGKT) coordinates substrate. Interaction with substrate tRNA regions lie at residues 42 to 45 (DSAL), 166 to 170 (QRLSR), and 247 to 252 (RCVGYR).

This sequence belongs to the IPP transferase family. As to quaternary structure, monomer. The cofactor is Mg(2+).

It carries out the reaction adenosine(37) in tRNA + dimethylallyl diphosphate = N(6)-dimethylallyladenosine(37) in tRNA + diphosphate. In terms of biological role, catalyzes the transfer of a dimethylallyl group onto the adenine at position 37 in tRNAs that read codons beginning with uridine, leading to the formation of N6-(dimethylallyl)adenosine (i(6)A). In Salmonella enteritidis PT4 (strain P125109), this protein is tRNA dimethylallyltransferase.